The following is a 214-amino-acid chain: Threonylcarbamoyl-AMP synthase (214 aa).

The YrdC-like domain occupies 9 to 214 (TDSVIQAAHW…GDALTGQIIR (206 aa)).

Belongs to the SUA5 family. TsaC subfamily.

It localises to the cytoplasm. The catalysed reaction is L-threonine + hydrogencarbonate + ATP = L-threonylcarbamoyladenylate + diphosphate + H2O. In terms of biological role, required for the formation of a threonylcarbamoyl group on adenosine at position 37 (t(6)A37) in tRNAs that read codons beginning with adenine. Catalyzes the conversion of L-threonine, HCO(3)(-)/CO(2) and ATP to give threonylcarbamoyl-AMP (TC-AMP) as the acyladenylate intermediate, with the release of diphosphate. The sequence is that of Threonylcarbamoyl-AMP synthase from Psychrobacter arcticus (strain DSM 17307 / VKM B-2377 / 273-4).